Consider the following 783-residue polypeptide: Cyclic di-GMP phosphodiesterase NbdA (783 aa).

An MHYT domain is found at 81–274 (YSPSLVALAF…FTGMAALVLS (194 aa)). 7 helical membrane passes run 84–104 (SLVA…LDMV), 120–140 (IGAF…MLAF), 150–170 (LPIT…TMYM), 176–196 (FGLL…AAMH), 215–235 (LFAL…AAVP), 255–275 (LLAG…VLSV), and 292–312 (LGWL…WAAW). Topologically, residues 313 to 783 (SEKQRERRLS…APPLRSLNQA (471 aa)) are cytoplasmic. Residues 375-507 (KGLAVMFLDL…GRNNAQFFSR (133 aa)) form the GGDEF domain. Positions 516 to 770 (ELQMEEELRQ…ALEEFLRAYR (255 aa)) constitute an EAL domain. The 3',3'-c-di-GMP site is built by Q537, E551, R555, N610, and N615. Position 551 (E551) interacts with Mg(2+). N610 lines the Mg(2+) pocket. Mg(2+) is bound by residues E642, D672, and D673. D672 lines the 3',3'-c-di-GMP pocket. Position 696 (R696) interacts with 3',3'-c-di-GMP. A Mg(2+)-binding site is contributed by E729. 3',3'-c-di-GMP-binding residues include E732 and Y751.

The cofactor is Mg(2+).

The protein resides in the cell inner membrane. The enzyme catalyses 3',3'-c-di-GMP + H2O = 5'-phosphoguanylyl(3'-&gt;5')guanosine + H(+). Its activity is regulated as follows. PDE activity is stimulated by GTP. It could also be stimulated by NO. In terms of biological role, displays c-di-GMP-specific phosphodiesterase (PDE) activity. Seems to play a specific role in nitric oxide (NO)-induced biofilm dispersion. Enhanced NbdA synthesis in the presence of NO increases PDE activity, leading to reduced cellular c-di-GMP levels and biofilm dispersion. Does not show diguanylate cyclase (DGC) activity. The sequence is that of Cyclic di-GMP phosphodiesterase NbdA from Pseudomonas aeruginosa (strain ATCC 15692 / DSM 22644 / CIP 104116 / JCM 14847 / LMG 12228 / 1C / PRS 101 / PAO1).